We begin with the raw amino-acid sequence, 199 residues long: Chaperone protein TorD (199 aa).

It belongs to the TorD/DmsD family. TorD subfamily.

It is found in the cytoplasm. Functionally, involved in the biogenesis of TorA. Acts on TorA before the insertion of the molybdenum cofactor and, as a result, probably favors a conformation of the apoenzyme that is competent for acquiring the cofactor. In Escherichia coli O7:K1 (strain IAI39 / ExPEC), this protein is Chaperone protein TorD.